The sequence spans 129 residues: Follitropin subunit beta (129 aa).

A signal peptide spans 1–18 (MKSVQFCFLFCCWKAICC). 6 cysteine pairs are disulfide-bonded: cysteine 21-cysteine 69, cysteine 35-cysteine 84, cysteine 38-cysteine 122, cysteine 46-cysteine 100, cysteine 50-cysteine 102, and cysteine 105-cysteine 112. Residues asparagine 25 and asparagine 42 are each glycosylated (N-linked (GlcNAc...) asparagine).

The protein belongs to the glycoprotein hormones subunit beta family. As to quaternary structure, heterodimer. The active follitropin is a heterodimer composed of an alpha chain/CGA shared with other hormones and a unique beta chain/FSHB shown here.

The protein localises to the secreted. Its function is as follows. Together with the alpha chain CGA constitutes follitropin, the follicle-stimulating hormone, and provides its biological specificity to the hormone heterodimer. Binds FSHR, a G protein-coupled receptor, on target cells to activate downstream signaling pathways. Follitropin is involved in follicle development and spermatogenesis in reproductive organs. The polypeptide is Follitropin subunit beta (FSHB) (Oryctolagus cuniculus (Rabbit)).